The chain runs to 158 residues: Small ribosomal subunit protein uS9 (158 aa).

It belongs to the universal ribosomal protein uS9 family.

This chain is Small ribosomal subunit protein uS9, found in Rhodopseudomonas palustris (strain HaA2).